A 493-amino-acid polypeptide reads, in one-letter code: Protein nucleotidyltransferase YdiU (493 aa).

ATP contacts are provided by Gly96, Gly98, Arg99, Lys119, Asp131, Gly132, Arg182, and Arg189. Asp258 serves as the catalytic Proton acceptor. Residues Asn259 and Asp268 each coordinate Mg(2+). Position 268 (Asp268) interacts with ATP. Residues 471–493 (EKYTEFKNPPAPKERVSQTFCGT) are disordered.

Belongs to the SELO family. The cofactor is Mg(2+). Mn(2+) serves as cofactor.

It carries out the reaction L-seryl-[protein] + ATP = 3-O-(5'-adenylyl)-L-seryl-[protein] + diphosphate. The enzyme catalyses L-threonyl-[protein] + ATP = 3-O-(5'-adenylyl)-L-threonyl-[protein] + diphosphate. The catalysed reaction is L-tyrosyl-[protein] + ATP = O-(5'-adenylyl)-L-tyrosyl-[protein] + diphosphate. It catalyses the reaction L-histidyl-[protein] + UTP = N(tele)-(5'-uridylyl)-L-histidyl-[protein] + diphosphate. It carries out the reaction L-seryl-[protein] + UTP = O-(5'-uridylyl)-L-seryl-[protein] + diphosphate. The enzyme catalyses L-tyrosyl-[protein] + UTP = O-(5'-uridylyl)-L-tyrosyl-[protein] + diphosphate. In terms of biological role, nucleotidyltransferase involved in the post-translational modification of proteins. It can catalyze the addition of adenosine monophosphate (AMP) or uridine monophosphate (UMP) to a protein, resulting in modifications known as AMPylation and UMPylation. This chain is Protein nucleotidyltransferase YdiU, found in Nitrosococcus oceani (strain ATCC 19707 / BCRC 17464 / JCM 30415 / NCIMB 11848 / C-107).